An 833-amino-acid polypeptide reads, in one-letter code: MTFYDHTAIEPKWQAFWADNHTFKTGTDASKPKFYALDMFPYPSGAGLHVGHPEGYTATDILSRFKRAQGHNVLHPMGWDAFGLPAEQYAMDTGNDPAEFTAENIANFKRQINALGFSYDWDREVNTTDPNYYKWTQWIFTKLYEKGLAYEAEVPVNWVEELGTAIANEEVLPDGTSERGGYPVVRKPMRQWMLKITAYAERLLEDLEEVDWPESIKDMQRNWIGKSTGANVTFKVKDTDKDFTVFTTRPDTLFGATYAVLAPEHALVDAITTADQAEAVADYKRQASLKSDLARTDLAKEKTGVWTGSYAINPVNGNEMPVWIADYVLASYGTGAIMAVPAHDERDWEFAKQFKLDIIPVLEGGNVEEAAFTEDGLHINSDFLDGLDKASAIAKMVEWLEAEGVGNEKVTYRLRDWLFSRQRYWGEPIPIIHWEDGTSTAVPESELPLVLPVTKDIRPSGTGESPLANVTDWLEVTREDGVKGRRETNTMPQWAGSSWYYLRYIDPHNTEKLADEELLKQWLPVDIYVGGAEHAVLHLLYARFWHKVLYDLGVVPTKEPFQKLFNQGMILGTSYRDSRGALVATDKVEKRDGSFFHVETGEELEQAPAKMSKSLKNVVNPDDVVEQYGADTLRVYEMFMGPLDASIAWSEEGLEGSRKFLDRVYRLITTKEITEENSGALDKVYNETVKAVTEQVDQMKFNTAIAQLMVFVNAANKEDKLFSDYAKGFVQLIAPFAPHLGEELWQVLTASGESISYVPWPSYDKSKLVENDVEIVVQIKGKVKAKLVVAKDLSREELQEVALANEKVQAEIAGKDIIKVIAVPNKLVNIVIK.

The 'HIGH' region signature appears at 41 to 52; sequence PYPSGAGLHVGH. The 'KMSKS' region motif lies at 610–614; it reads KMSKS. Position 613 (K613) interacts with ATP.

The protein belongs to the class-I aminoacyl-tRNA synthetase family.

It is found in the cytoplasm. It catalyses the reaction tRNA(Leu) + L-leucine + ATP = L-leucyl-tRNA(Leu) + AMP + diphosphate. The protein is Leucine--tRNA ligase of Streptococcus pyogenes serotype M28 (strain MGAS6180).